The following is an 878-amino-acid chain: NUT family member 2E (878 aa).

Disordered regions lie at residues 273 to 324 (WSQG…DDSC), 417 to 511 (QKSQ…VPEE), 527 to 560 (LLGP…PPDP), 622 to 757 (RLPP…EEEE), and 775 to 878 (WLPQ…HCSQ). 2 stretches are compositionally biased toward pro residues: residues 278–288 (PLPPPPPPAAQ) and 427–444 (CLPP…PPAP). Basic and acidic residues-rich tracts occupy residues 537-551 (EPEK…KQPQ) and 622-631 (RLPPLKEKQH).

Belongs to the NUT family.

In Homo sapiens (Human), this protein is NUT family member 2E (NUTM2E).